A 216-amino-acid polypeptide reads, in one-letter code: Sporamin B (216 aa).

The N-terminal stretch at 1–21 is a signal peptide; it reads MKALALLFVLSLYLLPNPAHS.

The protein belongs to the protease inhibitor I3 (leguminous Kunitz-type inhibitor) family. As to expression, accumulates specifically in tuberous roots and tubers upon tuberization. Sporamin accounts 60 to 80% of the total soluble protein of the organ.

It localises to the vacuole. In terms of biological role, major tuberous root protein. The polypeptide is Sporamin B (GSPO-B1) (Ipomoea batatas (Sweet potato)).